A 595-amino-acid chain; its full sequence is D-xylonate dehydratase (595 aa).

Residue cysteine 64 participates in [2Fe-2S] cluster binding. Glutamate 96 is a Mg(2+) binding site. Position 132 (cysteine 132) interacts with [2Fe-2S] cluster. Residue aspartate 133 participates in Mg(2+) binding. Cysteine 205 serves as a coordination point for [2Fe-2S] cluster. Glutamate 467 serves as a coordination point for Mg(2+).

This sequence belongs to the IlvD/Edd family. Homotetramer. [2Fe-2S] cluster is required as a cofactor. It depends on Mg(2+) as a cofactor.

The enzyme catalyses D-xylonate = 2-dehydro-3-deoxy-D-arabinonate + H2O. It carries out the reaction D-gluconate = 2-dehydro-3-deoxy-D-gluconate + H2O. It functions in the pathway carbohydrate metabolism; D-xylose degradation. Its function is as follows. Catalyzes the dehydration of D-xylonate to 2-dehydro-3-deoxy-D-arabinonate during D-xylose degradation. Can also dehydrate D-gluconate, with similar catalytic efficiency. Has weak activity with D-galactonate, D-fuconate and L-arabinonate. The sequence is that of D-xylonate dehydratase from Caulobacter vibrioides (strain ATCC 19089 / CIP 103742 / CB 15) (Caulobacter crescentus).